We begin with the raw amino-acid sequence, 82 residues long: Small ribosomal subunit protein bS16 (82 aa).

The protein belongs to the bacterial ribosomal protein bS16 family.

The sequence is that of Small ribosomal subunit protein bS16 from Klebsiella pneumoniae subsp. pneumoniae (strain ATCC 700721 / MGH 78578).